The chain runs to 139 residues: Holo-[acyl-carrier-protein] synthase (139 aa).

Mg(2+)-binding residues include Asp8 and Glu57.

It belongs to the P-Pant transferase superfamily. AcpS family. Requires Mg(2+) as cofactor.

The protein localises to the cytoplasm. The enzyme catalyses apo-[ACP] + CoA = holo-[ACP] + adenosine 3',5'-bisphosphate + H(+). Transfers the 4'-phosphopantetheine moiety from coenzyme A to a Ser of acyl-carrier-protein. This chain is Holo-[acyl-carrier-protein] synthase, found in Sinorhizobium fredii (strain NBRC 101917 / NGR234).